A 218-amino-acid polypeptide reads, in one-letter code: Peroxynitrite isomerase 2 (218 aa).

Residues 1-24 form a disordered region; that stretch reads MTPAGDTPERGSGDRAVAEAAERA. Residues 7–24 are compositionally biased toward basic and acidic residues; sequence TPERGSGDRAVAEAAERA. The GXWXGXG motif lies at 65-71; sequence GVWRGEG. The heme b site is built by K181 and H208.

This sequence belongs to the nitrobindin family. As to quaternary structure, homodimer. Requires heme b as cofactor.

The catalysed reaction is peroxynitrite = nitrate. It participates in nitrogen metabolism. In terms of biological role, heme-binding protein able to scavenge peroxynitrite and to protect free L-tyrosine against peroxynitrite-mediated nitration, by acting as a peroxynitrite isomerase that converts peroxynitrite to nitrate. Therefore, this protein likely plays a role in peroxynitrite sensing and in the detoxification of reactive nitrogen and oxygen species (RNS and ROS, respectively). Is able to bind nitric oxide (NO) in vitro, but may act as a sensor of peroxynitrite levels in vivo. The polypeptide is Peroxynitrite isomerase 2 (Mycolicibacterium smegmatis (strain ATCC 700084 / mc(2)155) (Mycobacterium smegmatis)).